Consider the following 549-residue polypeptide: Glucose-6-phosphate isomerase (549 aa).

Residue glutamate 355 is the Proton donor of the active site. Active-site residues include histidine 386 and lysine 514.

It belongs to the GPI family.

It is found in the cytoplasm. It catalyses the reaction alpha-D-glucose 6-phosphate = beta-D-fructose 6-phosphate. The protein operates within carbohydrate biosynthesis; gluconeogenesis. Its pathway is carbohydrate degradation; glycolysis; D-glyceraldehyde 3-phosphate and glycerone phosphate from D-glucose: step 2/4. In terms of biological role, catalyzes the reversible isomerization of glucose-6-phosphate to fructose-6-phosphate. This is Glucose-6-phosphate isomerase from Salmonella paratyphi B (strain ATCC BAA-1250 / SPB7).